We begin with the raw amino-acid sequence, 126 residues long: Holo-[acyl-carrier-protein] synthase (126 aa).

Asp9 and Glu58 together coordinate Mg(2+).

This sequence belongs to the P-Pant transferase superfamily. AcpS family. The cofactor is Mg(2+).

Its subcellular location is the cytoplasm. The enzyme catalyses apo-[ACP] + CoA = holo-[ACP] + adenosine 3',5'-bisphosphate + H(+). In terms of biological role, transfers the 4'-phosphopantetheine moiety from coenzyme A to a Ser of acyl-carrier-protein. The protein is Holo-[acyl-carrier-protein] synthase of Vibrio vulnificus (strain CMCP6).